We begin with the raw amino-acid sequence, 97 residues long: Co-chaperonin GroES (97 aa).

Belongs to the GroES chaperonin family. In terms of assembly, heptamer of 7 subunits arranged in a ring. Interacts with the chaperonin GroEL.

The protein localises to the cytoplasm. Together with the chaperonin GroEL, plays an essential role in assisting protein folding. The GroEL-GroES system forms a nano-cage that allows encapsulation of the non-native substrate proteins and provides a physical environment optimized to promote and accelerate protein folding. GroES binds to the apical surface of the GroEL ring, thereby capping the opening of the GroEL channel. The sequence is that of Co-chaperonin GroES from Salmonella agona (strain SL483).